The primary structure comprises 673 residues: Kinesin-like protein KIFC1 (673 aa).

Residues Ser-6, Ser-26, Ser-31, and Ser-33 each carry the phosphoserine modification. Disordered stretches follow at residues 23-94 (KAPS…TGPR) and 109-136 (VPAV…KRPA). Residues 60–86 (TKITTSHPRVPSLTTVPQTQGQTTAQK) show a composition bias toward polar residues. Residues 142–306 (QLCDLNAELK…RRRLHNQLQE (165 aa)) are a coiled coil. In terms of domain architecture, Kinesin motor spans 310–663 (NIRVFCRVRP…LRFASKVNQC (354 aa)). Residues 325–372 (PTPPPGLLLFPSGPGGPSDPPTRLSLSRSDERRGTLSGAPAPPTRHDF) are disordered. Thr-359 is modified (phosphothreonine). ATP is bound at residue 410–417 (GQTGSGKT).

It belongs to the TRAFAC class myosin-kinesin ATPase superfamily. Kinesin family. NCD subfamily. In terms of assembly, binds NUBP1 and NUBP2. Interacts with PPP1R42.

Its subcellular location is the nucleus. It is found in the cytoplasm. The protein resides in the cytoskeleton. It localises to the microtubule organizing center. The protein localises to the centrosome. Its subcellular location is the spindle. It is found in the early endosome. Minus end-directed microtubule-dependent motor required for bipolar spindle formation. May contribute to movement of early endocytic vesicles. Regulates cilium formation and structure. The polypeptide is Kinesin-like protein KIFC1 (KIFC1) (Homo sapiens (Human)).